The chain runs to 1191 residues: Roquin-2 (1191 aa).

Residues cysteine 14, cysteine 17, cysteine 33, histidine 35, cysteine 38, cysteine 50, and aspartate 53 each coordinate Zn(2+). The segment at 14 to 54 (CPICYNEFDENVHKPISLGCSHTVCKTCLNKLHRKACPFDQ) adopts an RING-type; degenerate zinc-finger fold. An HEPN-N region spans residues 91-170 (ENKHYEVAKK…RTVTELILQH (80 aa)). The segment at 171-325 (QNPQQLSANL…SIIDKLQSPE (155 aa)) is ROQ. An HEPN-C region spans residues 326 to 396 (SFAKSVQELT…GLVDFIQNYS (71 aa)). Residues 410–438 (KYKTSMCRDLRQQGGCPRGTNCTFAHSQE) form a C3H1-type zinc finger. Disordered stretches follow at residues 528–576 (GANG…NSVP) and 644–680 (ESSL…PQPY). The segment covering 530–546 (NGQNAAGPSADSVTENK) has biased composition (polar residues). At serine 549 the chain carries Phosphoserine. Residues 554 to 576 (PVSNVAATSAGPSNVGTELNSVP) are compositionally biased toward polar residues. Residues serine 808, serine 983, and serine 1119 each carry the phosphoserine modification.

As to quaternary structure, interacts with EDC4. Interacts with CCR4-NOT deadenylase complex. Interacts with MAP3K5; the interaction is probably stimulus-dependent. Proteolytically cleaved after Arg-509 and Arg-585 by MALT1 in activated CD4(+) T cells; cleavage at Arg-509 and Arg-585 is critical for promoting RC3H1 degradation in response to T-cell receptor (TCR) stimulation, and hence is necessary for prolonging the stability of a set of mRNAs controlling Th17 cell differentiation. As to expression, expressed in spleen, testis, ovary and small intestine.

The protein localises to the cytoplasm. It is found in the P-body. The catalysed reaction is S-ubiquitinyl-[E2 ubiquitin-conjugating enzyme]-L-cysteine + [acceptor protein]-L-lysine = [E2 ubiquitin-conjugating enzyme]-L-cysteine + N(6)-ubiquitinyl-[acceptor protein]-L-lysine.. The protein operates within protein modification; protein ubiquitination. Its activity is regulated as follows. Binding to dsRNA, but not CDE RNA, crosstalks with the E3 ubiquitin ligase activity and may inhibit ubiquitination. Its function is as follows. Post-transcriptional repressor of mRNAs containing a conserved stem loop motif, called constitutive decay element (CDE), which is often located in the 3'-UTR, as in HMGXB3, ICOS, IER3, NFKBID, NFKBIZ, PPP1R10, TNF and in many more mRNAs. Binds to CDE and promotes mRNA deadenylation and degradation. This process does not involve miRNAs. In follicular helper T (Tfh) cells, represses of ICOS and TNFRSF4 expression, thus preventing spontaneous Tfh cell differentiation, germinal center B-cell differentiation in the absence of immunization and autoimmunity. In resting or LPS-stimulated macrophages, controls inflammation by suppressing TNF expression. Also recognizes CDE in its own mRNA and in that of paralogous RC3H1, possibly leading to feedback loop regulation. miRNA-binding protein that regulates microRNA homeostasis. Enhances DICER-mediated processing of pre-MIR146a but reduces mature MIR146a levels through an increase of 3' end uridylation. Both inhibits ICOS mRNA expression and they may act together to exert the suppression. Acts as a ubiquitin E3 ligase. Pairs with E2 enzymes UBE2B, UBE2D2, UBE2E2, UBE2E3, UBE2G2, UBE2K and UBE2Q2 and produces polyubiquitin chains. Shows the strongest activity when paired with UBE2N:UBE2V1 or UBE2N:UBE2V2 E2 complexes and generate both short and long polyubiquitin chains. Involved in the ubiquitination of MAP3K5. Able to interact with double-stranded RNA (dsRNA). This Homo sapiens (Human) protein is Roquin-2 (RC3H2).